Consider the following 267-residue polypeptide: MKENRITRLVKQDKKLLIAYYMPEFPVPGATLPVLEALQESGVDLIELGMPYSDPIGDGSVIQDAAHKAISHGVHVGSIFELVRRARNGEGCKKITTPILLMGYCNPLIAYGGDCFMADAVKAGVDGLLIPDLPPEESEDFLERAKHFGLSVIYLISPVTPPDRIELIDSMSTDFSYCLAVNATTGTGKLDVAGMDEKIAEYLKRVRQHTKKKFVVGFGIKDRERVRKMWELADGAVVGSALLQHVATAKTPEETAELAAGFWKSLR.

Residues E47 and D58 each act as proton acceptor in the active site.

It belongs to the TrpA family. In terms of assembly, tetramer of two alpha and two beta chains.

It catalyses the reaction (1S,2R)-1-C-(indol-3-yl)glycerol 3-phosphate + L-serine = D-glyceraldehyde 3-phosphate + L-tryptophan + H2O. It functions in the pathway amino-acid biosynthesis; L-tryptophan biosynthesis; L-tryptophan from chorismate: step 5/5. The alpha subunit is responsible for the aldol cleavage of indoleglycerol phosphate to indole and glyceraldehyde 3-phosphate. The protein is Tryptophan synthase alpha chain of Chlorobaculum tepidum (strain ATCC 49652 / DSM 12025 / NBRC 103806 / TLS) (Chlorobium tepidum).